A 106-amino-acid chain; its full sequence is ATP-dependent Clp protease adapter protein ClpS (106 aa).

Belongs to the ClpS family. In terms of assembly, binds to the N-terminal domain of the chaperone ClpA.

Its function is as follows. Involved in the modulation of the specificity of the ClpAP-mediated ATP-dependent protein degradation. This Salmonella agona (strain SL483) protein is ATP-dependent Clp protease adapter protein ClpS.